Reading from the N-terminus, the 145-residue chain is uncharacterized protein (145 aa).

The tract at residues 62-145 (LPSVGGRMTA…QLPQQGGCPG (84 aa)) is disordered. A compositionally biased stretch (pro residues) spans 84 to 95 (ASSPEDPPLPHP).

This is an uncharacterized protein from Homo sapiens (Human).